The primary structure comprises 263 residues: Receptor-transporting protein 1 (263 aa).

The Cytoplasmic segment spans residues Met1–Ser238. The segment at Ala88–Gly197 adopts a 3CxxC-type zinc-finger fold. The chain crosses the membrane as a helical span at residues Ile239 to Phe259. At Arg260–Val263 the chain is on the extracellular side.

It belongs to the TMEM7 family. Interacts with olfactory receptors. In terms of tissue distribution, predominantly expressed in olfactory and vomeronasal organs, in mature olfactory sensory neurons.

The protein localises to the cell membrane. Functionally, specifically promotes functional cell surface expression of olfactory receptors, but not of other GPCRs. The protein is Receptor-transporting protein 1 (Rtp1) of Mus musculus (Mouse).